Here is a 288-residue protein sequence, read N- to C-terminus: ATP synthase gamma chain (288 aa).

It belongs to the ATPase gamma chain family. In terms of assembly, F-type ATPases have 2 components, CF(1) - the catalytic core - and CF(0) - the membrane proton channel. CF(1) has five subunits: alpha(3), beta(3), gamma(1), delta(1), epsilon(1). CF(0) has three main subunits: a, b and c.

The protein localises to the cell inner membrane. Its function is as follows. Produces ATP from ADP in the presence of a proton gradient across the membrane. The gamma chain is believed to be important in regulating ATPase activity and the flow of protons through the CF(0) complex. This is ATP synthase gamma chain from Acidithiobacillus ferrooxidans (strain ATCC 23270 / DSM 14882 / CIP 104768 / NCIMB 8455) (Ferrobacillus ferrooxidans (strain ATCC 23270)).